The following is a 95-amino-acid chain: Sec-independent protein translocase protein TatA (95 aa).

A helical transmembrane segment spans residues 1-21; that stretch reads MFGRLGAPEIILILVVIILLF. Basic and acidic residues predominate over residues 44–55; it reads AKAMKSEAKADD. The interval 44-95 is disordered; that stretch reads AKAMKSEAKADDAAPADPPNPEQSAAQRTIQAAPGDVTSSRPVTEPTDTTKR.

It belongs to the TatA/E family. In terms of assembly, the Tat system comprises two distinct complexes: a TatABC complex, containing multiple copies of TatA, TatB and TatC subunits, and a separate TatA complex, containing only TatA subunits. Substrates initially bind to the TatABC complex, which probably triggers association of the separate TatA complex to form the active translocon.

The protein resides in the cell membrane. Its function is as follows. Part of the twin-arginine translocation (Tat) system that transports large folded proteins containing a characteristic twin-arginine motif in their signal peptide across membranes. TatA could form the protein-conducting channel of the Tat system. The sequence is that of Sec-independent protein translocase protein TatA from Streptomyces coelicolor (strain ATCC BAA-471 / A3(2) / M145).